Here is a 120-residue protein sequence, read N- to C-terminus: Ribosome-binding factor A (120 aa).

Belongs to the RbfA family. Monomer. Binds 30S ribosomal subunits, but not 50S ribosomal subunits or 70S ribosomes.

It localises to the cytoplasm. In terms of biological role, one of several proteins that assist in the late maturation steps of the functional core of the 30S ribosomal subunit. Associates with free 30S ribosomal subunits (but not with 30S subunits that are part of 70S ribosomes or polysomes). Required for efficient processing of 16S rRNA. May interact with the 5'-terminal helix region of 16S rRNA. This Verminephrobacter eiseniae (strain EF01-2) protein is Ribosome-binding factor A.